The following is a 501-amino-acid chain: Pyruvate kinase (501 aa).

Residue arginine 50 coordinates substrate. Residues asparagine 52, serine 54, aspartate 85, and threonine 86 each coordinate K(+). 52-55 (NFSH) serves as a coordination point for ATP. ATP is bound by residues arginine 92 and lysine 178. Glutamate 243 is a binding site for Mg(2+). Glycine 266, aspartate 267, and threonine 299 together coordinate substrate. Aspartate 267 is a Mg(2+) binding site.

This sequence belongs to the pyruvate kinase family. As to quaternary structure, homotetramer. It depends on Mg(2+) as a cofactor. The cofactor is K(+).

It carries out the reaction pyruvate + ATP = phosphoenolpyruvate + ADP + H(+). Its pathway is carbohydrate degradation; glycolysis; pyruvate from D-glyceraldehyde 3-phosphate: step 5/5. In Naumovozyma castellii (Yeast), this protein is Pyruvate kinase (PYK1).